A 1028-amino-acid polypeptide reads, in one-letter code: MRTGGYTIQQTLTTEAASVLKHSLTLARRRGHAQVTPLHVAATLLSSRTSLLRRACIKSHPGFSTNYQFAPSRLQHHHHHNQNHPLQCRALELCFNVALNRLPTVPGPMFHGQPSLANALVAALKRAQAHQRRGCIEQQQQTQTHPQTQQTQLLAVKVELEQLVISILDDPSVSRVMREAGFNSTAVKSCVEDCSVSSVFYGGSAVGVFSSPNSPDQQQQHHNSINRLHHYQNPKDFNFINPNFPLWQTHFLNQSPDQNPLLLSSSASHHHQQQRLREIDLKLVVDVLMRKKTKKKNPVIVGDSISFTEGFVSELMAKLERGEIDQTGELKQTHFVKFHFSPMASKFMRREDVELNIKELRKKVLSLTTSGKNAIIFTGDLKWTVKEITNNNSGGINEISSSYSPLDHLVEEIGKLITECNDDGDDDDCKTRKVWVMGTASFQTYMRCQMRQPSLETLWALHPVSVPSSANLGLSLHATSGHEARNMSTVNATKSLSGYDKAEEEETISHVLSCCPECVTSFDREAKSLKANQDKLLPSWLQSHDADSSSQKDELMGLKRKWNRFCETLHNQTGQLSMMGNYPYGLPYGSSHESSKSTSLIDSLGLKPNQRATNSIAKFRRQNSCTIEFDLGGNEHEKGESINEAEDDKGNETVTLDLGRSLFRSDSVTDTRLKLSALVKALEESIPRQTVTMRLIAESLMDCVSKKKDSWIIIEGRDTTAKRRVARTVSESVFGSFESLVHIDLKKKGNESKASPATLLAYELKNPEKVVFLIEDIDLADSRFLKLLADRFEDKRRIKTGIDHRQAIFILTKEDSRNVRNRDSVLQIGLEITAQSPGKKRKPESDLSIENGFWMKKEVCSRQSSFNSSYLDLNIKAEDEEVEGEISPISSDLTGEEETEFSSSSNFLNRIQNRFVLNRSCEPGIEKGMITAAFREIFPEREEGGGVRFSVEDKLVEELYGIQNGAFERWLKEVFQTGLLTVKKGGKKDTGVIRMVFGGIVDNKGYGGGVGGYMATFLPNKVQVSKFE.

Residues 8 to 199 (IQQTLTTEAA…CVEDCSVSSV (192 aa)) enclose the Clp R domain. Repeat regions lie at residues 12–102 (LTTE…LNRL) and 116–199 (LANA…VSSV). Residues 871–875 (LDLNI) carry the EAR motif.

It belongs to the ClpA/ClpB family. In terms of assembly, interacts probably with TPL/TPR in an EAR-motif dependent manner. In terms of tissue distribution, detected in roots, seedlings and axillary branches.

Functionally, may function in a transcriptional corepressor complex. This Arabidopsis thaliana (Mouse-ear cress) protein is Protein SMAX1-LIKE 5.